Here is a 173-residue protein sequence, read N- to C-terminus: U1 small nuclear ribonucleoprotein C (173 aa).

The Matrin-type zinc finger occupies 4-36 (YYCDYCDTYLTHDSPSVRKTHCQGRKHKDNVKF). The disordered stretch occupies residues 72 to 100 (AAIPPPANMQGPPRPVPPGPMGPGPNMLG). The segment covering 73-94 (AIPPPANMQGPPRPVPPGPMGP) has biased composition (pro residues).

It belongs to the U1 small nuclear ribonucleoprotein C family. As to quaternary structure, U1 snRNP is composed of the 7 core Sm proteins B/B', D1, D2, D3, E, F and G that assemble in a heptameric protein ring on the Sm site of the small nuclear RNA to form the core snRNP, and at least 3 U1 snRNP-specific proteins U1-70K, U1-A and U1-C. U1-C interacts with U1 snRNA and the 5' splice-site region of the pre-mRNA.

The protein localises to the nucleus. Component of the spliceosomal U1 snRNP, which is essential for recognition of the pre-mRNA 5' splice-site and the subsequent assembly of the spliceosome. U1-C is directly involved in initial 5' splice-site recognition for both constitutive and regulated alternative splicing. The interaction with the 5' splice-site seems to precede base-pairing between the pre-mRNA and the U1 snRNA. Stimulates commitment or early (E) complex formation by stabilizing the base pairing of the 5' end of the U1 snRNA and the 5' splice-site region. This Pediculus humanus subsp. corporis (Body louse) protein is U1 small nuclear ribonucleoprotein C.